A 46-amino-acid polypeptide reads, in one-letter code: Myoregulin (46 aa).

Residues 1–21 (MSGKSWVLISTTSPQSLEDEI) are Cytoplasmic-facing. The helical transmembrane segment at 22-42 (LGRLLKILFVLFVDLMSIMYV) threads the bilayer. Over 43-46 (VITS) the chain is Lumenal.

In terms of assembly, homooligomer. Monomer. Interacts with ATP2A1/SERCA1. Interacts as a monomer with ATP2A2/SERCA2; the interaction inhibits ATP2A2 activity. As to expression, specifically expressed in all skeletal muscles. Detected in both fast- and slow-type skeletal muscle. Not expressed in cardiac or smooth muscles.

It is found in the sarcoplasmic reticulum membrane. Functionally, inhibits the activity of ATP2A1/SERCA1 ATPase in sarcoplasmic reticulum by decreasing the apparent affinity of the ATPase for Ca(2+), thereby acting as a key regulator of skeletal muscle activity. Its high expression in adult skeletal muscle, suggests that it constitutes the predominant regulator of ATP2A1/SERCA1 in adult skeletal muscle. Also inhibits the activity of ATP2A2/SERCA2 and ATP2A3/SERCA3. This is Myoregulin from Mus musculus (Mouse).